The primary structure comprises 492 residues: Ethanolamine-phosphate phospho-lyase (492 aa).

An N6-(pyridoxal phosphate)lysine modification is found at K280. Residues 462 to 492 (ASDENGLVHPSNGNSHKHTSTIPLSKKTKRN) form a disordered region.

Belongs to the class-III pyridoxal-phosphate-dependent aminotransferase family. Homotetramer. It depends on pyridoxal 5'-phosphate as a cofactor.

The protein localises to the mitochondrion. The catalysed reaction is phosphoethanolamine + H2O = acetaldehyde + NH4(+) + phosphate. Its function is as follows. Catalyzes the pyridoxal-phosphate-dependent breakdown of phosphoethanolamine, converting it to ammonia, inorganic phosphate and acetaldehyde. This is Ethanolamine-phosphate phospho-lyase (etnppl) from Danio rerio (Zebrafish).